The primary structure comprises 163 residues: Phosphopantetheine adenylyltransferase (163 aa).

S8 serves as a coordination point for substrate. Residues 8–9 and H16 each bind ATP; that span reads SF. Substrate contacts are provided by K40, T72, and R86. Residues 87–89, E97, and 122–128 each bind ATP; these read GLR and HSFLSSS.

Belongs to the bacterial CoaD family. As to quaternary structure, homohexamer. Mg(2+) serves as cofactor.

The protein localises to the cytoplasm. The enzyme catalyses (R)-4'-phosphopantetheine + ATP + H(+) = 3'-dephospho-CoA + diphosphate. The protein operates within cofactor biosynthesis; coenzyme A biosynthesis; CoA from (R)-pantothenate: step 4/5. Functionally, reversibly transfers an adenylyl group from ATP to 4'-phosphopantetheine, yielding dephospho-CoA (dPCoA) and pyrophosphate. The chain is Phosphopantetheine adenylyltransferase from Synechococcus sp. (strain CC9902).